Reading from the N-terminus, the 100-residue chain is Large ribosomal subunit protein bL21 (100 aa).

This sequence belongs to the bacterial ribosomal protein bL21 family. As to quaternary structure, part of the 50S ribosomal subunit. Contacts protein L20.

This protein binds to 23S rRNA in the presence of protein L20. This chain is Large ribosomal subunit protein bL21, found in Rhodospirillum rubrum (strain ATCC 11170 / ATH 1.1.1 / DSM 467 / LMG 4362 / NCIMB 8255 / S1).